The sequence spans 499 residues: Aspartyl/glutamyl-tRNA(Asn/Gln) amidotransferase subunit B (499 aa).

The protein belongs to the GatB/GatE family. GatB subfamily. Heterotrimer of A, B and C subunits.

The catalysed reaction is L-glutamyl-tRNA(Gln) + L-glutamine + ATP + H2O = L-glutaminyl-tRNA(Gln) + L-glutamate + ADP + phosphate + H(+). The enzyme catalyses L-aspartyl-tRNA(Asn) + L-glutamine + ATP + H2O = L-asparaginyl-tRNA(Asn) + L-glutamate + ADP + phosphate + 2 H(+). Its function is as follows. Allows the formation of correctly charged Asn-tRNA(Asn) or Gln-tRNA(Gln) through the transamidation of misacylated Asp-tRNA(Asn) or Glu-tRNA(Gln) in organisms which lack either or both of asparaginyl-tRNA or glutaminyl-tRNA synthetases. The reaction takes place in the presence of glutamine and ATP through an activated phospho-Asp-tRNA(Asn) or phospho-Glu-tRNA(Gln). The chain is Aspartyl/glutamyl-tRNA(Asn/Gln) amidotransferase subunit B from Bifidobacterium animalis subsp. lactis (strain AD011).